The sequence spans 102 residues: Inner membrane protein YaiY (102 aa).

The Cytoplasmic segment spans residues 1–24; sequence MADFTLSKSLFSGKYRNASSTPGN. Residues 25 to 45 form a helical membrane-spanning segment; sequence IAYALFVLFCFWAGAQLLNLL. Residues 46-74 are Periplasmic-facing; sequence VHAPGVYERLMQVQETGRPRVEIGLGVGT. The chain crosses the membrane as a helical span at residues 75-95; sequence IFGLIPFLVGCLIFAVVALWL. The Cytoplasmic segment spans residues 96-102; it reads HWRHRRQ.

The protein resides in the cell inner membrane. The polypeptide is Inner membrane protein YaiY (yaiY) (Escherichia coli O157:H7).